The sequence spans 639 residues: tRNA-dihydrouridine(47) synthase [NAD(P)(+)]-like (639 aa).

2 stretches are compositionally biased toward polar residues: residues 1 to 19 (MAES…TVTQ) and 54 to 65 (QTCSELSGNDAE). 2 disordered regions span residues 1–20 (MAES…VTQK) and 52–122 (DKQT…HSQF). The span at 66–85 (NTVRAEDAAEPEAKRIKLDD) shows a compositional bias: basic and acidic residues. A compositionally biased stretch (basic residues) spans 103–119 (EKKRARGQNKSRPHMKH). C3H1-type zinc fingers lie at residues 122-152 (FEEN…HDVA) and 160-190 (EDIR…HLGD). Residues 300–302 (PLT) and Gln-354 contribute to the FMN site. The Proton donor role is filled by Cys-385. FMN is bound by residues Lys-424, His-454, 486-488 (NGD), and 509-510 (AR).

The protein belongs to the Dus family. Dus3 subfamily. FMN is required as a cofactor.

It catalyses the reaction 5,6-dihydrouridine(47) in tRNA + NAD(+) = uridine(47) in tRNA + NADH + H(+). The catalysed reaction is 5,6-dihydrouridine(47) in tRNA + NADP(+) = uridine(47) in tRNA + NADPH + H(+). The enzyme catalyses a 5,6-dihydrouridine in mRNA + NAD(+) = a uridine in mRNA + NADH + H(+). It carries out the reaction a 5,6-dihydrouridine in mRNA + NADP(+) = a uridine in mRNA + NADPH + H(+). In terms of biological role, catalyzes the synthesis of dihydrouridine, a modified base, in various RNAs, such as tRNAs, mRNAs and some long non-coding RNAs (lncRNAs). Mainly modifies the uridine in position 47 (U47) in the D-loop of most cytoplasmic tRNAs. Also able to mediate the formation of dihydrouridine in some mRNAs, thereby regulating their translation. In Xenopus tropicalis (Western clawed frog), this protein is tRNA-dihydrouridine(47) synthase [NAD(P)(+)]-like (dus3l).